Consider the following 432-residue polypeptide: MVNVVLGSQWGDEGKGKLVDLLVGKYDIVARCAGGNNAGHTIVVNGIKYDFHMLPSGLVNPNCSNLLGNGVVIHVPSLFSELNNLSEKGLKDCDKRLFISSRAHIVFDFHQHTDKLRELELKGISKDGKNIGTTGKGIGPTYSTKASRSGLRVHHLVNDQPGAWEEFEAKYRRLLKTRRERYGDFEYDPEEELNRYKKYKELLKPMVVDSVFFINNAIANGKKILVEGANALMLDIDFGTYPFVTSSSTGIGGVITGLGVSPRHINEVYGVVKAYTTRVGEGPFPTEQLNEQGEKLQTIGAEFGVTTGRKRRCGWLDLVVLKYSAMINGYTSLNITKLDVLDTFKEIPVGVSYSINGKKLDSFPEDLINLGNVDVEYVTLPGWDQDITKITEFDQLPENAKKYLKFIEDFVGIPIEWVGTGPARESMLHRDV.

Residues 11-17 (GDEGKGK) and 39-41 (GHT) each bind GTP. The Proton acceptor role is filled by Asp-12. Residues Asp-12 and Gly-39 each contribute to the Mg(2+) site. Residues 12–15 (DEGK), 37–40 (NAGH), Thr-134, Arg-148, Asn-230, Thr-245, and Arg-309 contribute to the IMP site. His-40 serves as the catalytic Proton donor. A substrate-binding site is contributed by 305–311 (VTTGRKR). GTP is bound by residues Arg-311, 337-339 (KLD), and 419-421 (GTG).

This sequence belongs to the adenylosuccinate synthetase family. In terms of assembly, homodimer. It depends on Mg(2+) as a cofactor.

It is found in the cytoplasm. The enzyme catalyses IMP + L-aspartate + GTP = N(6)-(1,2-dicarboxyethyl)-AMP + GDP + phosphate + 2 H(+). It participates in purine metabolism; AMP biosynthesis via de novo pathway; AMP from IMP: step 1/2. Functionally, plays an important role in the de novo pathway and in the salvage pathway of purine nucleotide biosynthesis. Catalyzes the first committed step in the biosynthesis of AMP from IMP. The protein is Adenylosuccinate synthetase of Vanderwaltozyma polyspora (strain ATCC 22028 / DSM 70294 / BCRC 21397 / CBS 2163 / NBRC 10782 / NRRL Y-8283 / UCD 57-17) (Kluyveromyces polysporus).